We begin with the raw amino-acid sequence, 636 residues long: DNA mismatch repair protein MutL (636 aa).

Over residues 332–344 (HAGEQGDSLRTDI) the composition is skewed to basic and acidic residues. 2 disordered regions span residues 332–360 (HAGEQGDSLRTDIADAPEQPGATATPADN) and 417–443 (ASAPADAAPAQASEPAAAPQADDSDDA). Residues 417-437 (ASAPADAAPAQASEPAAAPQA) show a composition bias toward low complexity.

This sequence belongs to the DNA mismatch repair MutL/HexB family.

In terms of biological role, this protein is involved in the repair of mismatches in DNA. It is required for dam-dependent methyl-directed DNA mismatch repair. May act as a 'molecular matchmaker', a protein that promotes the formation of a stable complex between two or more DNA-binding proteins in an ATP-dependent manner without itself being part of a final effector complex. The polypeptide is DNA mismatch repair protein MutL (Ralstonia nicotianae (strain ATCC BAA-1114 / GMI1000) (Ralstonia solanacearum)).